We begin with the raw amino-acid sequence, 258 residues long: Granzyme K (258 aa).

A signal peptide spans 1–23 (MSFSSSALVFLVAGIYMSSESFH). Positions 24–25 (TE) are cleaved as a propeptide — activation peptide. Residues 26–253 (IIGGREVQPH…YQTWIKSKLA (228 aa)) enclose the Peptidase S1 domain. A disulfide bridge connects residues Cys-51 and Cys-67. Active-site charge relay system residues include His-66 and Asp-110. Intrachain disulfides connect Cys-143/Cys-214, Cys-175/Cys-193, and Cys-204/Cys-228. Ser-208 functions as the Charge relay system in the catalytic mechanism.

This sequence belongs to the peptidase S1 family. Granzyme subfamily. Speen, lungs and liver non-parenchymal cells.

It is found in the cytoplasmic granule. This chain is Granzyme K (Gzmk), found in Rattus norvegicus (Rat).